The sequence spans 452 residues: Exodeoxyribonuclease 7 large subunit (452 aa).

The protein belongs to the XseA family. As to quaternary structure, heterooligomer composed of large and small subunits.

It localises to the cytoplasm. The enzyme catalyses Exonucleolytic cleavage in either 5'- to 3'- or 3'- to 5'-direction to yield nucleoside 5'-phosphates.. In terms of biological role, bidirectionally degrades single-stranded DNA into large acid-insoluble oligonucleotides, which are then degraded further into small acid-soluble oligonucleotides. This is Exodeoxyribonuclease 7 large subunit from Bacillus cereus (strain B4264).